We begin with the raw amino-acid sequence, 1099 residues long: MEILYTEITQDLTEGLLEISLEELEKNRKVYYIVPSSMSFEKEKEILERLAKGSDSAVFDLLVTRFKQLPYYFDKREKATTKTELGTAGLSMLFRRVLRSFSKEEIPLYFSLQDSAGFLEMLIQLRTELLTANLSVENLPDSPKNQELKKILSRFEEKLANDYANYSEFGDFTSRLADGEFDFQLKDVTIVIDGYTRFSAEEELFIESIQDRVARFVIGTYSDENSLTAGSETIYISTSQMIGRFRSKFPVELRKMAFSSVNEVYNKLTKLLDLDSRFAISDQNIEINSADAKYFRIWEAENQKVEIEGVAKEIRQKISQGAFFKDFTVLVGDPAAYEITLKEIFELYEIPFFYAQEESMSQHPLVIFFESLLSIKKNNYGTDDVVNLLKSKVYTDVNLDEEVIDYFEYYVQKYKISGRKKFTEAFNESEFSKIELVNQLRENLLGNDSPLQVFLGTNRQKTGKKWVSDLQVLLENGNVMANMNTYFSEAESENKHQMADKHEQVWQMLISILNEFLAVFSDEKLKSVEFLDILLAGLKNAKYRQIPANVDVVNIKDYELVEPKTNKYIYAIGLSQTNFPRIKKNSTLLSDEERLEINQTTDENQFIEQLNVVNYQKNQFTVLSLVNSAKETLVLSMPQIMANEQGEFSPVFQLFLNHSDEKILQKIQEVNLFESLEHIGNSRSVISMIGKIERELVETEEKNDDKRVFWSSIFRILVKSNPDFQKILLDLAKDIDTVNLSQETLDQIYGDKLYASVSSFERFYNCEYQYFLETTLGLETFENIDINSKIVGNFFHEVFEKVMQEEALSAENFDEKLTKVLHDVDSNYSRYFTHDATARFTWTNLEEIVRQTATVLKETVSTDELKTLLTESSFGLPKSELGNFSVDDIYLRGRIDRLDQLSSDYLGAIDYKSSAHSFKLQDAYDGLSLQFMTYLDVIKEAFPNQKIWGALYLQFKNQPINLSEINHLSEIAGLLKESMRYDGLVLEEAADQIKAIENITVKKSNIYNQEEFEQLLKLNENHYQHAGQRLKSGQIAINPIMKRSEGIDQTGNVRGCRYCPLKSICRFEANVHMNDHSREIGQKSQAEILAELKGEGRNE.

Cys-766, Cys-1056, Cys-1059, and Cys-1065 together coordinate [4Fe-4S] cluster.

Belongs to the helicase family. AddB/RexB type 2 subfamily. Heterodimer of AddA and RexB. The cofactor is Mg(2+). It depends on [4Fe-4S] cluster as a cofactor.

In terms of biological role, the heterodimer acts as both an ATP-dependent DNA helicase and an ATP-dependent, dual-direction single-stranded exonuclease. Recognizes the chi site generating a DNA molecule suitable for the initiation of homologous recombination. This subunit has 5' -&gt; 3' nuclease activity but not helicase activity. The protein is ATP-dependent helicase/deoxyribonuclease subunit B of Lactococcus lactis subsp. lactis (strain IL1403) (Streptococcus lactis).